Here is an 891-residue protein sequence, read N- to C-terminus: DNA mismatch repair protein MutS (891 aa).

Position 617 to 624 (617 to 624) interacts with ATP; the sequence is GPNMSGKS. The span at 805–827 shows a compositional bias: basic and acidic residues; sequence REKIEEEEPKTKDTKRGPSEKVK. Residues 805-840 form a disordered region; sequence REKIEEEEPKTKDTKRGPSEKVKNASPTLPRDEKGR.

It belongs to the DNA mismatch repair MutS family.

Its function is as follows. This protein is involved in the repair of mismatches in DNA. It is possible that it carries out the mismatch recognition step. This protein has a weak ATPase activity. In Porphyromonas gingivalis (strain ATCC BAA-308 / W83), this protein is DNA mismatch repair protein MutS.